The chain runs to 392 residues: 2-oxoisovalerate dehydrogenase subunit beta, mitochondrial (392 aa).

A mitochondrion-targeting transit peptide spans 1–50 (MAVVAAAAGWLLRLRAAGAEGHWRRLPGAGLARGFLHPAATVEDAAQRRQ). Tyrosine 152 is a thiamine diphosphate binding site. Residues glycine 178, leucine 180, threonine 181, cysteine 228, and aspartate 231 each contribute to the K(+) site. Lysine 232 is subject to N6-acetyllysine. Asparagine 233 contacts K(+). Lysine 241 is modified (N6-acetyllysine).

In terms of assembly, heterotetramer of 2 alpha/BCKDHA and 2 beta chains/BCKDHB that forms the branched-chain alpha-keto acid decarboxylase (E1) component of the BCKD complex. The branched-chain alpha-ketoacid dehydrogenase is a large complex composed of three major building blocks E1, E2 and E3. It is organized around E2, a 24-meric cubic core composed of DBT, to which are associated 6 to 12 copies of E1, and approximately 6 copies of the dehydrogenase E3, a DLD dimer. It depends on thiamine diphosphate as a cofactor.

Its subcellular location is the mitochondrion matrix. The catalysed reaction is N(6)-[(R)-lipoyl]-L-lysyl-[protein] + 3-methyl-2-oxobutanoate + H(+) = N(6)-[(R)-S(8)-2-methylpropanoyldihydrolipoyl]-L-lysyl-[protein] + CO2. Its function is as follows. Together with BCKDHA forms the heterotetrameric E1 subunit of the mitochondrial branched-chain alpha-ketoacid dehydrogenase (BCKD) complex. The BCKD complex catalyzes the multi-step oxidative decarboxylation of alpha-ketoacids derived from the branched-chain amino-acids valine, leucine and isoleucine producing CO2 and acyl-CoA which is subsequently utilized to produce energy. The E1 subunit catalyzes the first step with the decarboxylation of the alpha-ketoacid forming an enzyme-product intermediate. A reductive acylation mediated by the lipoylamide cofactor of E2 extracts the acyl group from the E1 active site for the next step of the reaction. This chain is 2-oxoisovalerate dehydrogenase subunit beta, mitochondrial, found in Homo sapiens (Human).